The chain runs to 66 residues: Large ribosomal subunit protein uL30 (66 aa).

The protein belongs to the universal ribosomal protein uL30 family. In terms of assembly, part of the 50S ribosomal subunit.

The chain is Large ribosomal subunit protein uL30 from Azorhizobium caulinodans (strain ATCC 43989 / DSM 5975 / JCM 20966 / LMG 6465 / NBRC 14845 / NCIMB 13405 / ORS 571).